The sequence spans 396 residues: Purine ribonucleoside efflux pump NepI (396 aa).

The Cytoplasmic segment spans residues 1-21 (MSEFIAENRGADAITRPNWSA). Residues 22–42 (VFSVAFCVACLIIVEFLPVSL) traverse the membrane as a helical segment. Over 43–54 (LTPMAQDLGISE) the chain is Periplasmic. The helical transmembrane segment at 55–75 (GVAGQSVTVTAFVAMFASLFI) threads the bilayer. Residues 76–85 (TQTIQATDRR) are Cytoplasmic-facing. A helical transmembrane segment spans residues 86 to 106 (NVVILFAVLLTLSCLLVSFAN). Serine 107 is a topological domain (periplasmic). The chain crosses the membrane as a helical span at residues 108 to 128 (FSLLLIGRACLGLALGGFWAM). Residues 129–147 (SASLTMRLVPPRTVPKALS) lie on the Cytoplasmic side of the membrane. The chain crosses the membrane as a helical span at residues 148–168 (VIFGAVSIALVIAAPLGSFLG). The Periplasmic segment spans residues 169–175 (ELIGWRN). Residues 176–196 (VFNAAAVMGVLCIFWIIKSLP) form a helical membrane-spanning segment. Over 197-215 (SLPGEPSHQKQNTFRLLQR) the chain is Cytoplasmic. A helical transmembrane segment spans residues 216 to 236 (PGVMAGMIAIFMSFAGQFAFF). Over 237-255 (TYIRPVYMNLAGFSVDGLT) the chain is Periplasmic. Residues 256–276 (LVLLSFGIASFIGTSLSSFIL) form a helical membrane-spanning segment. Residues 277–281 (KRSVK) lie on the Cytoplasmic side of the membrane. Residues 282 to 302 (LALAGAPLILAVSALVLTLWG) traverse the membrane as a helical segment. Residues 303–305 (SDK) are Periplasmic-facing. A helical membrane pass occupies residues 306–326 (IVATGVAIIWGLTFALVPVGW). The Cytoplasmic portion of the chain corresponds to 327–343 (STWITRSLADQAEKAGS). A helical membrane pass occupies residues 344-364 (IQVAVIQLANTCGAAIGGYAL). The Periplasmic portion of the chain corresponds to 365 to 366 (DN). A helical transmembrane segment spans residues 367 to 387 (IGLTSPLMFSGTLMLLTALLV). The Cytoplasmic segment spans residues 388 to 396 (TAKVKMKKS).

It belongs to the major facilitator superfamily. DHA1 family. NepI (TC 2.A.1.2.26) subfamily.

The protein localises to the cell inner membrane. The catalysed reaction is inosine(in) + H(+)(out) = inosine(out) + H(+)(in). The enzyme catalyses guanosine(in) + H(+)(out) = guanosine(out) + H(+)(in). Functionally, involved in the efflux of purine ribonucleosides, such as inosine and guanosine. The polypeptide is Purine ribonucleoside efflux pump NepI (Shigella sonnei (strain Ss046)).